We begin with the raw amino-acid sequence, 846 residues long: Rho GTPase-activating protein 17 (846 aa).

One can recognise a BAR domain in the interval 14-246 (QTVGRAEKTE…MRAHQDKWAE (233 aa)). A Rho-GAP domain is found at 252-442 (TPLEEHLKRS…PIIQHADWFF (191 aa)). Over residues 459-475 (TPNSNHSSHTGNDSDSG) the composition is skewed to polar residues. Positions 459–482 (TPNSNHSSHTGNDSDSGTLERKRP) are disordered. Residues Ser484 and Ser575 each carry the phosphoserine modification. The tract at residues 519 to 807 (IAPAFQPPLP…ASRIVTDTNS (289 aa)) is disordered. Positions 592–619 (RNSNQMTTVPNQAQTGGNSHQLSVSTPH) are enriched in polar residues. A compositionally biased stretch (pro residues) spans 637–650 (APAPPKPGNLPPGH). Positions 653–690 (GQSSPGTGTSPKPSARSPSPPQQQQQQQQQQQQQQQQQ) are enriched in low complexity. Ser698 and Ser700 each carry phosphoserine. 2 stretches are compositionally biased toward pro residues: residues 704-717 (IQAP…PPTQ) and 726-741 (EPGP…PSTP). A phosphothreonine mark is found at Thr730, Thr734, and Thr736. The short motif at 730–743 (TPPQTPTPPSTPPL) is the SH3-binding element. Residue Ser739 is modified to Phosphoserine. The residue at position 740 (Thr740) is a Phosphothreonine. A compositionally biased stretch (polar residues) spans 746 to 757 (QNPSQSETTQLH). Over residues 772–782 (RPSVPPPPHPP) the composition is skewed to pro residues. Positions 791-807 (LTSSVPTASRIVTDTNS) are enriched in polar residues.

As to quaternary structure, component of a complex whose core is composed of ARHGAP17, AMOT, PALS1, PATJ and PARD3/PAR3. Interacts with NHERF1, FNBP1, TRIP10, CAPZA (CAPZA1, CAPZA2 or CAPZA3), CAPZB, CD2AP and SH3KBP1/CIN85.

The protein resides in the membrane. It is found in the cytoplasm. It localises to the cell junction. The protein localises to the tight junction. Functionally, rho GTPase-activating protein involved in the maintenance of tight junction by regulating the activity of CDC42, thereby playing a central role in apical polarity of epithelial cells. Specifically acts as a GTPase activator for the CDC42 GTPase by converting it to an inactive GDP-bound state. The complex formed with AMOT acts by regulating the uptake of polarity proteins at tight junctions, possibly by deciding whether tight junction transmembrane proteins are recycled back to the plasma membrane or sent elsewhere. Participates in the Ca(2+)-dependent regulation of exocytosis, possibly by catalyzing GTPase activity of Rho family proteins and by inducing the reorganization of the cortical actin filaments. Acts as a GTPase activator in vitro for RAC1. The protein is Rho GTPase-activating protein 17 (Arhgap17) of Mus musculus (Mouse).